A 298-amino-acid chain; its full sequence is Protoheme IX farnesyltransferase (298 aa).

A run of 9 helical transmembrane segments spans residues 26-46 (VVGH…PGVP), 52-72 (FWAS…NHFL), 98-118 (VVGF…AFVN), 120-140 (LTAF…TVYL), 148-168 (IVIG…AVTG), 174-194 (ALLL…AYAI), 214-234 (IAFT…AGLM), 241-261 (SGEI…YYAI), and 278-298 (YSLV…YIVL).

The protein belongs to the UbiA prenyltransferase family. Protoheme IX farnesyltransferase subfamily.

The protein resides in the cell inner membrane. It carries out the reaction heme b + (2E,6E)-farnesyl diphosphate + H2O = Fe(II)-heme o + diphosphate. Its pathway is porphyrin-containing compound metabolism; heme O biosynthesis; heme O from protoheme: step 1/1. In terms of biological role, converts heme B (protoheme IX) to heme O by substitution of the vinyl group on carbon 2 of heme B porphyrin ring with a hydroxyethyl farnesyl side group. This Methylococcus capsulatus (strain ATCC 33009 / NCIMB 11132 / Bath) protein is Protoheme IX farnesyltransferase.